Here is a 233-residue protein sequence, read N- to C-terminus: Transcriptional regulatory protein PrrA (233 aa).

The Response regulatory domain occupies 9 to 123 (RVLVVDDDSD…ELVARVKALL (115 aa)). Residue D58 is modified to 4-aspartylphosphate. The ompR/PhoB-type DNA-binding region spans 134 to 232 (SETITVGPLE…VRGVGFVLRM (99 aa)).

In terms of processing, phosphorylated by PrrB at Asp-58.

It is found in the cytoplasm. Functionally, member of the two-component regulatory system PrrB/PrrA that is involved specifically in early intracellular multiplication of Mycobacterium and is essential for its viability. Upon phosphorylation by PrrB, functions as a transcription regulator by direct binding to promoter regions of target genes to positively regulate their expression. Autoregulates its own expression. This chain is Transcriptional regulatory protein PrrA (prrA), found in Mycobacterium bovis (strain ATCC BAA-935 / AF2122/97).